Consider the following 172-residue polypeptide: MKQKLLMLLLLGSVSLFANEAAASGGTDIIPRTVNFLIFAAILYYLAAEPIKRFFQERKEGIAKRLEEVEAKLKEAKEEKAQAEAELKKAKELAQEIVETAKQEIEILTKEIKEQAKQEIEMLEKSFEESMELEKRKRVRAITKEVLEELFEEKALELEKEKFVNLIVKKVA.

Residues 5-24 (LLMLLLLGSVSLFANEAAAS) traverse the membrane as a helical segment.

This sequence belongs to the ATPase B chain family. F-type ATPases have 2 components, F(1) - the catalytic core - and F(0) - the membrane proton channel. F(1) has five subunits: alpha(3), beta(3), gamma(1), delta(1), epsilon(1). F(0) has three main subunits: a(1), b(2) and c(10-14). The alpha and beta chains form an alternating ring which encloses part of the gamma chain. F(1) is attached to F(0) by a central stalk formed by the gamma and epsilon chains, while a peripheral stalk is formed by the delta and b chains.

The protein resides in the cell inner membrane. In terms of biological role, f(1)F(0) ATP synthase produces ATP from ADP in the presence of a proton or sodium gradient. F-type ATPases consist of two structural domains, F(1) containing the extramembraneous catalytic core and F(0) containing the membrane proton channel, linked together by a central stalk and a peripheral stalk. During catalysis, ATP synthesis in the catalytic domain of F(1) is coupled via a rotary mechanism of the central stalk subunits to proton translocation. Functionally, component of the F(0) channel, it forms part of the peripheral stalk, linking F(1) to F(0). In Nitratiruptor sp. (strain SB155-2), this protein is ATP synthase subunit b.